Here is a 582-residue protein sequence, read N- to C-terminus: Aspartate--tRNA ligase (582 aa).

Glu-174 is an L-aspartate binding site. The interval 198 to 201 (QITK) is aspartate. Arg-220 contacts L-aspartate. ATP-binding positions include 220 to 222 (RDE) and Gln-229. His-443 is a binding site for L-aspartate. Glu-477 is a binding site for ATP. Position 484 (Arg-484) interacts with L-aspartate. Position 529-532 (529-532 (GLDR)) interacts with ATP.

It belongs to the class-II aminoacyl-tRNA synthetase family. Type 1 subfamily. In terms of assembly, homodimer.

The protein localises to the cytoplasm. It carries out the reaction tRNA(Asp) + L-aspartate + ATP = L-aspartyl-tRNA(Asp) + AMP + diphosphate. Its function is as follows. Catalyzes the attachment of L-aspartate to tRNA(Asp) in a two-step reaction: L-aspartate is first activated by ATP to form Asp-AMP and then transferred to the acceptor end of tRNA(Asp). The protein is Aspartate--tRNA ligase of Streptococcus pyogenes serotype M1.